The primary structure comprises 255 residues: Type III pantothenate kinase (255 aa).

6 to 13 contacts ATP; the sequence is DIGNTNTV. Substrate-binding positions include Tyr-100 and 107–110; that span reads GADR. The active-site Proton acceptor is Asp-109. Asp-129 contacts K(+). Thr-132 serves as a coordination point for ATP. Residue Thr-185 participates in substrate binding.

The protein belongs to the type III pantothenate kinase family. Homodimer. It depends on NH4(+) as a cofactor. K(+) is required as a cofactor.

Its subcellular location is the cytoplasm. The enzyme catalyses (R)-pantothenate + ATP = (R)-4'-phosphopantothenate + ADP + H(+). Its pathway is cofactor biosynthesis; coenzyme A biosynthesis; CoA from (R)-pantothenate: step 1/5. Catalyzes the phosphorylation of pantothenate (Pan), the first step in CoA biosynthesis. The protein is Type III pantothenate kinase of Desulfosudis oleivorans (strain DSM 6200 / JCM 39069 / Hxd3) (Desulfococcus oleovorans).